Reading from the N-terminus, the 123-residue chain is Small ribosomal subunit protein uS12 (123 aa).

A 3-methylthioaspartic acid modification is found at D89.

The protein belongs to the universal ribosomal protein uS12 family. As to quaternary structure, part of the 30S ribosomal subunit. Contacts proteins S8 and S17. May interact with IF1 in the 30S initiation complex.

Functionally, with S4 and S5 plays an important role in translational accuracy. In terms of biological role, interacts with and stabilizes bases of the 16S rRNA that are involved in tRNA selection in the A site and with the mRNA backbone. Located at the interface of the 30S and 50S subunits, it traverses the body of the 30S subunit contacting proteins on the other side and probably holding the rRNA structure together. The combined cluster of proteins S8, S12 and S17 appears to hold together the shoulder and platform of the 30S subunit. This is Small ribosomal subunit protein uS12 from Bradyrhizobium diazoefficiens (strain JCM 10833 / BCRC 13528 / IAM 13628 / NBRC 14792 / USDA 110).